We begin with the raw amino-acid sequence, 424 residues long: Tyrosine--tRNA ligase (424 aa).

Tyr37 provides a ligand contact to L-tyrosine. The 'HIGH' region signature appears at 42 to 51 (PTADSLHLGH). Lys144 bears the N6-acetyllysine mark. L-tyrosine is bound by residues Tyr175 and Gln179. The 'KMSKS' region motif lies at 235–239 (KFGKT). Position 238 (Lys238) interacts with ATP. In terms of domain architecture, S4 RNA-binding spans 357–414 (ADLMQALVDSELQPSRGQARKTIASNAITINGEKQSDPEYFFKEEDRLFGRFTLLRRG).

It belongs to the class-I aminoacyl-tRNA synthetase family. TyrS type 1 subfamily. In terms of assembly, homodimer.

It localises to the cytoplasm. It catalyses the reaction tRNA(Tyr) + L-tyrosine + ATP = L-tyrosyl-tRNA(Tyr) + AMP + diphosphate + H(+). Its function is as follows. Catalyzes the attachment of tyrosine to tRNA(Tyr) in a two-step reaction: tyrosine is first activated by ATP to form Tyr-AMP and then transferred to the acceptor end of tRNA(Tyr). This chain is Tyrosine--tRNA ligase, found in Shigella boydii serotype 4 (strain Sb227).